A 522-amino-acid chain; its full sequence is Protein GDS1 (522 aa).

4 disordered regions span residues Ala56–Asp88, Gln222–Ser268, Leu300–Ala391, and Ser433–Glu489. Residues Leu62 to Ile73 show a composition bias toward polar residues. Basic and acidic residues predominate over residues Lys74–Asp88. 4 stretches are compositionally biased toward polar residues: residues Gln222–Asn236, Ser244–Asp260, Leu300–Pro314, and Ser355–Lys366. The segment covering Ser368–Ser378 has biased composition (low complexity). A compositionally biased stretch (polar residues) spans Lys379–Ala391. The segment covering Glu439–Ser467 has biased composition (low complexity). Over residues Asp468–Glu489 the composition is skewed to polar residues.

Its function is as follows. Involved in nuclear control of mitochondria. This Saccharomyces cerevisiae (strain ATCC 204508 / S288c) (Baker's yeast) protein is Protein GDS1 (GDS1).